A 1057-amino-acid chain; its full sequence is Carbamoyl phosphate synthase large chain (1057 aa).

The segment at 1 to 401 is carboxyphosphate synthetic domain; the sequence is MPKREDINKI…ATQKAIRSLD (401 aa). ATP contacts are provided by arginine 129, arginine 169, glycine 175, glycine 176, glutamine 208, isoleucine 210, glutamate 215, glycine 241, isoleucine 242, histidine 243, glutamine 284, and glutamate 298. The ATP-grasp 1 domain occupies 133-327; that stretch reads RALMNDLNEP…IAKVAAKIAV (195 aa). Mg(2+) contacts are provided by glutamine 284, glutamate 298, and asparagine 300. Positions 284, 298, and 300 each coordinate Mn(2+). The segment at 402 to 546 is oligomerization domain; sequence IDINYIGDEE…YSTYELENES (145 aa). The carbamoyl phosphate synthetic domain stretch occupies residues 547–929; the sequence is IVSNRKSIVV…ALYKAFEGAK (383 aa). The 191-residue stretch at 671–861 folds into the ATP-grasp 2 domain; sequence NKLIQANGIR…MARLATRAIL (191 aa). ATP is bound by residues arginine 707, glutamine 746, leucine 748, glutamate 752, glycine 777, valine 778, histidine 779, serine 780, glutamine 820, and glutamate 832. Mg(2+) contacts are provided by glutamine 820, glutamate 832, and asparagine 834. 3 residues coordinate Mn(2+): glutamine 820, glutamate 832, and asparagine 834. An MGS-like domain is found at 930-1057; the sequence is MHMPDHGKVL…ESQAFTTLHL (128 aa). The tract at residues 930–1057 is allosteric domain; sequence MHMPDHGKVL…ESQAFTTLHL (128 aa).

The protein belongs to the CarB family. Composed of two chains; the small (or glutamine) chain promotes the hydrolysis of glutamine to ammonia, which is used by the large (or ammonia) chain to synthesize carbamoyl phosphate. Tetramer of heterodimers (alpha,beta)4. Mg(2+) serves as cofactor. Mn(2+) is required as a cofactor.

The catalysed reaction is hydrogencarbonate + L-glutamine + 2 ATP + H2O = carbamoyl phosphate + L-glutamate + 2 ADP + phosphate + 2 H(+). It carries out the reaction hydrogencarbonate + NH4(+) + 2 ATP = carbamoyl phosphate + 2 ADP + phosphate + 2 H(+). Its pathway is amino-acid biosynthesis; L-arginine biosynthesis; carbamoyl phosphate from bicarbonate: step 1/1. The protein operates within pyrimidine metabolism; UMP biosynthesis via de novo pathway; (S)-dihydroorotate from bicarbonate: step 1/3. Functionally, large subunit of the glutamine-dependent carbamoyl phosphate synthetase (CPSase). CPSase catalyzes the formation of carbamoyl phosphate from the ammonia moiety of glutamine, carbonate, and phosphate donated by ATP, constituting the first step of 2 biosynthetic pathways, one leading to arginine and/or urea and the other to pyrimidine nucleotides. The large subunit (synthetase) binds the substrates ammonia (free or transferred from glutamine from the small subunit), hydrogencarbonate and ATP and carries out an ATP-coupled ligase reaction, activating hydrogencarbonate by forming carboxy phosphate which reacts with ammonia to form carbamoyl phosphate. The sequence is that of Carbamoyl phosphate synthase large chain from Pediococcus pentosaceus (strain ATCC 25745 / CCUG 21536 / LMG 10740 / 183-1w).